The chain runs to 176 residues: uncharacterized protein (176 aa).

This is an uncharacterized protein from Schizosaccharomyces pombe (strain 972 / ATCC 24843) (Fission yeast).